The primary structure comprises 166 residues: Large ribosomal subunit protein uL10 (166 aa).

The protein belongs to the universal ribosomal protein uL10 family. As to quaternary structure, part of the ribosomal stalk of the 50S ribosomal subunit. The N-terminus interacts with L11 and the large rRNA to form the base of the stalk. The C-terminus forms an elongated spine to which L12 dimers bind in a sequential fashion forming a multimeric L10(L12)X complex.

Forms part of the ribosomal stalk, playing a central role in the interaction of the ribosome with GTP-bound translation factors. The polypeptide is Large ribosomal subunit protein uL10 (Shouchella clausii (strain KSM-K16) (Alkalihalobacillus clausii)).